Consider the following 486-residue polypeptide: 2-hydroxymuconic semialdehyde dehydrogenase (486 aa).

Active-site residues include Glu-254 and Cys-288.

Belongs to the aldehyde dehydrogenase family.

It catalyses the reaction (2Z,4E)-2-hydroxy-6-oxohexa-2,4-dienoate + NAD(+) + H2O = (2Z,4E)-2-hydroxyhexa-2,4-dienedioate + NADH + 2 H(+). The protein operates within aromatic compound metabolism; benzoate degradation via hydroxylation. In terms of biological role, 2-hydroxymuconic acid semialdehyde can be converted to 2-hydroxypent-2,4-dienoate either directly by the action of 2-hydroxymuconic semialdehyde hydrolase (HMSH) or by the action of three sequential enzymes, the first of which is HMSD. This is 2-hydroxymuconic semialdehyde dehydrogenase (dmpC) from Pseudomonas sp. (strain CF600).